Consider the following 232-residue polypeptide: MNKILLVDDDRELTSLLKELLDMEGFNVLVAHDGEQALALLDDSVDLLLLDVMMPKKNGIDTLKELRQTHQTPVIMLTARGSELDRVLGLELGADDYLPKPFNDRELVARIRAILRRSHWSEQQQTTEAGSPTLEVDALSLNPGRQEANFDGQTLELTGTEFTLLYLLAQHLGQVVSREHLSQEVLGKRLTPFDRAIDMHISNLRRKLPERKDGHPWFKTLRGRGYLMVSAS.

The region spanning 3 to 115 (KILLVDDDRE…ELVARIRAIL (113 aa)) is the Response regulatory domain. Asp51 carries the 4-aspartylphosphate modification. The ompR/PhoB-type DNA-binding region spans 131–230 (SPTLEVDALS…LRGRGYLMVS (100 aa)).

As to quaternary structure, interacts with cognate sensor kinase CpxA. In terms of processing, phosphorylated by CpxA.

The protein resides in the cytoplasm. With respect to regulation, the two-component system is activated by envelope stress such as overexpression of some (misfolded) periplasmic proteins. Functionally, response regulator member of the two-component regulatory system CpxA/CpxR which responds to envelope stress response by activating or, in some cases, repressing expression of downstream genes. Binds to the promoter regions of various genes in vitro, including ompC, cpxP, ryhB and mrkA and, when CpxR is phosphorylated, pecO. Represses expression of the major pilin of type 3 fimbriae MrkA as well as that of type 1 fimbriae FimA. Repression of expression of MrkA appears to be indirect, mediated by activation of the iron homeostasis regulator RyhB. The protein is Transcriptional regulatory protein CpxR of Klebsiella pneumoniae subsp. pneumoniae (strain HS11286).